Here is a 791-residue protein sequence, read N- to C-terminus: Probable phosphoketolase (791 aa).

It belongs to the XFP family. Thiamine diphosphate serves as cofactor.

This Pseudomonas putida (strain ATCC 700007 / DSM 6899 / JCM 31910 / BCRC 17059 / LMG 24140 / F1) protein is Probable phosphoketolase.